Reading from the N-terminus, the 196-residue chain is Proteasome subunit beta 1 (196 aa).

Residues 1 to 6 (MEKKTG) constitute a propeptide, removed in mature form; by autocatalysis. Threonine 7 acts as the Nucleophile in catalysis.

The protein belongs to the peptidase T1B family. The 20S proteasome core is composed of 14 alpha and 14 beta subunits that assemble into four stacked heptameric rings, resulting in a barrel-shaped structure. The two inner rings, each composed of seven catalytic beta subunits, are sandwiched by two outer rings, each composed of seven alpha subunits. The catalytic chamber with the active sites is on the inside of the barrel. Has a gated structure, the ends of the cylinder being occluded by the N-termini of the alpha-subunits. Is capped at one or both ends by the proteasome regulatory ATPase, PAN.

Its subcellular location is the cytoplasm. The enzyme catalyses Cleavage of peptide bonds with very broad specificity.. With respect to regulation, the formation of the proteasomal ATPase PAN-20S proteasome complex, via the docking of the C-termini of PAN into the intersubunit pockets in the alpha-rings, triggers opening of the gate for substrate entry. Interconversion between the open-gate and close-gate conformations leads to a dynamic regulation of the 20S proteasome proteolysis activity. Its function is as follows. Component of the proteasome core, a large protease complex with broad specificity involved in protein degradation. The polypeptide is Proteasome subunit beta 1 (Pyrococcus furiosus (strain ATCC 43587 / DSM 3638 / JCM 8422 / Vc1)).